Consider the following 273-residue polypeptide: F-actin-capping protein subunit alpha (273 aa).

This sequence belongs to the F-actin-capping protein alpha subunit family. In terms of assembly, heterodimer of an alpha and a beta subunit.

The protein localises to the cytoplasm. It localises to the cytoskeleton. F-actin-capping proteins bind in a Ca(2+)-independent manner to the fast growing ends of actin filaments (barbed end) thereby blocking the exchange of subunits at these ends. Unlike other capping proteins (such as gelsolin and severin), these proteins do not sever actin filaments. This Emericella nidulans (strain FGSC A4 / ATCC 38163 / CBS 112.46 / NRRL 194 / M139) (Aspergillus nidulans) protein is F-actin-capping protein subunit alpha (cap1).